Reading from the N-terminus, the 446-residue chain is Exodeoxyribonuclease 7 large subunit (446 aa).

This sequence belongs to the XseA family. In terms of assembly, heterooligomer composed of large and small subunits.

The protein resides in the cytoplasm. It catalyses the reaction Exonucleolytic cleavage in either 5'- to 3'- or 3'- to 5'-direction to yield nucleoside 5'-phosphates.. Functionally, bidirectionally degrades single-stranded DNA into large acid-insoluble oligonucleotides, which are then degraded further into small acid-soluble oligonucleotides. This is Exodeoxyribonuclease 7 large subunit from Streptococcus pneumoniae (strain Taiwan19F-14).